A 387-amino-acid polypeptide reads, in one-letter code: MACTIQKAEALDGARLMQILWYDEEESLYPAVWLRDNCPCSDCYLDSAKARKLLAEALDVNIGIKGLTFDRKKVYITWPDEHYSEFQADWLKKRCLSKQARAKLQRELFFPECQYWGSELQLPTLDFEDVLRYDEHAYKWLSTLKKVGIVRLTGASDKPGEVSKLGKRMGFLYLTFYGHTWQVQDKIDANNVAYTTGKLSFHTDYPALHHPPGVQLLHCIKQTVTGGDSEIVDGFNVCQKLKKNNPQAFQILSSTFVDFTDIGVDYCDFSVQSKHKIIELDDKGQVVRINFNNATRDTIFDVPVERVQPFYAALKEFVDLMNSKESKFTFKMNPGDVITFDNWRLLHGRRSYEAGTEISRHLEGAYADWDVVMSRLRILRQRVENGN.

Zn(2+) is bound by residues Cys38, Cys40, Cys43, and His82. Residues His202, Asp204, and His347 each contribute to the Fe cation site. Ser351 is subject to Phosphoserine.

Belongs to the gamma-BBH/TMLD family. Fe(2+) serves as cofactor. L-ascorbate is required as a cofactor.

It is found in the cytoplasm. It carries out the reaction 4-(trimethylamino)butanoate + 2-oxoglutarate + O2 = carnitine + succinate + CO2. It functions in the pathway amine and polyamine biosynthesis; carnitine biosynthesis. Its function is as follows. Catalyzes the formation of L-carnitine from gamma-butyrobetaine. The polypeptide is Gamma-butyrobetaine dioxygenase (BBOX1) (Pongo abelii (Sumatran orangutan)).